The primary structure comprises 101 residues: Replication restart protein PriB (101 aa).

Residues 1 to 101 (MATNHLVLSG…LHAENVELKT (101 aa)) form the SSB domain.

The protein belongs to the PriB family. As to quaternary structure, homodimer. Interacts with PriA and DnaT. Component of the replication restart primosome. Primosome assembly occurs via a 'hand-off' mechanism. PriA binds to replication forks, subsequently PriB then DnaT bind; DnaT then displaces ssDNA to generate the helicase loading substrate.

Involved in the restart of stalled replication forks, which reloads the replicative helicase on sites other than the origin of replication; the PriA-PriB pathway is the major replication restart pathway. During primosome assembly it facilitates complex formation between PriA and DnaT on DNA; stabilizes PriA on DNA. Stimulates the DNA unwinding activity of PriA helicase. In Shewanella sediminis (strain HAW-EB3), this protein is Replication restart protein PriB.